The sequence spans 306 residues: Pantothenate kinase (306 aa).

An ATP-binding site is contributed by 91 to 98 (GSVAVGKS).

Belongs to the prokaryotic pantothenate kinase family.

The protein resides in the cytoplasm. The catalysed reaction is (R)-pantothenate + ATP = (R)-4'-phosphopantothenate + ADP + H(+). The protein operates within cofactor biosynthesis; coenzyme A biosynthesis; CoA from (R)-pantothenate: step 1/5. This chain is Pantothenate kinase, found in Streptococcus gordonii (strain Challis / ATCC 35105 / BCRC 15272 / CH1 / DL1 / V288).